The sequence spans 152 residues: Protein-export protein SecB (152 aa).

It belongs to the SecB family. In terms of assembly, homotetramer, a dimer of dimers. One homotetramer interacts with 1 SecA dimer.

The protein localises to the cytoplasm. In terms of biological role, one of the proteins required for the normal export of preproteins out of the cell cytoplasm. It is a molecular chaperone that binds to a subset of precursor proteins, maintaining them in a translocation-competent state. It also specifically binds to its receptor SecA. The polypeptide is Protein-export protein SecB (Rickettsia typhi (strain ATCC VR-144 / Wilmington)).